Here is a 181-residue protein sequence, read N- to C-terminus: Large ribosomal subunit protein uL6 (181 aa).

The protein belongs to the universal ribosomal protein uL6 family. In terms of assembly, part of the 50S ribosomal subunit.

Its function is as follows. This protein binds to the 23S rRNA, and is important in its secondary structure. It is located near the subunit interface in the base of the L7/L12 stalk, and near the tRNA binding site of the peptidyltransferase center. This Saccharolobus solfataricus (strain ATCC 35092 / DSM 1617 / JCM 11322 / P2) (Sulfolobus solfataricus) protein is Large ribosomal subunit protein uL6.